The following is a 224-amino-acid chain: Urease accessory protein UreF (224 aa).

Belongs to the UreF family. In terms of assembly, ureD, UreF and UreG form a complex that acts as a GTP-hydrolysis-dependent molecular chaperone, activating the urease apoprotein by helping to assemble the nickel containing metallocenter of UreC. The UreE protein probably delivers the nickel.

The protein resides in the cytoplasm. Its function is as follows. Required for maturation of urease via the functional incorporation of the urease nickel metallocenter. In Pseudomonas putida (strain ATCC 47054 / DSM 6125 / CFBP 8728 / NCIMB 11950 / KT2440), this protein is Urease accessory protein UreF.